Here is a 288-residue protein sequence, read N- to C-terminus: uncharacterized protein (288 aa).

Residues 107–288 (KQIPTLIGPQ…LAIQLLASIA (182 aa)) enclose the ATP-grasp domain. ATP-binding positions include Lys-145 and 178-188 (QQYIATSNSEA). Residues Asp-248, Glu-261, and Asn-263 each coordinate Mg(2+). Residues Asp-248, Glu-261, and Asn-263 each contribute to the Mn(2+) site.

This sequence belongs to the RimK family.

This is an uncharacterized protein from Mycoplasma pneumoniae (strain ATCC 29342 / M129 / Subtype 1) (Mycoplasmoides pneumoniae).